The following is a 291-amino-acid chain: UPF0173 metal-dependent hydrolase Rmet_5695 (291 aa).

Belongs to the UPF0173 family.

This is UPF0173 metal-dependent hydrolase Rmet_5695 from Cupriavidus metallidurans (strain ATCC 43123 / DSM 2839 / NBRC 102507 / CH34) (Ralstonia metallidurans).